The following is a 280-amino-acid chain: Shikimate dehydrogenase (NADP(+)) (280 aa).

Residues 18–20 (SRS) and threonine 65 contribute to the shikimate site. The Proton acceptor role is filled by lysine 69. Residues asparagine 90 and aspartate 105 each coordinate shikimate. NADP(+)-binding positions include 131–135 (GAGGA), 154–159 (NRTRAR), and isoleucine 219. Tyrosine 221 lines the shikimate pocket. Glycine 242 provides a ligand contact to NADP(+).

This sequence belongs to the shikimate dehydrogenase family. In terms of assembly, homodimer.

It carries out the reaction shikimate + NADP(+) = 3-dehydroshikimate + NADPH + H(+). The protein operates within metabolic intermediate biosynthesis; chorismate biosynthesis; chorismate from D-erythrose 4-phosphate and phosphoenolpyruvate: step 4/7. Functionally, involved in the biosynthesis of the chorismate, which leads to the biosynthesis of aromatic amino acids. Catalyzes the reversible NADPH linked reduction of 3-dehydroshikimate (DHSA) to yield shikimate (SA). This Methylocella silvestris (strain DSM 15510 / CIP 108128 / LMG 27833 / NCIMB 13906 / BL2) protein is Shikimate dehydrogenase (NADP(+)).